Reading from the N-terminus, the 277-residue chain is MTQQLQQIIDAAWEDRANISSSAAPAEVRDAVEHVISELNNGKLRVATRESVGQWTVHQWIKKAVLLSFRLKDNEQMQAGSLGFYDKVPTKFSHLSANELKESGVRIVPPAVARRGSYIAKGAILMPSYVNIGAYVGEGTMVDTWATVGSCAQIGANVHLSGGVGIGGVLEPLQAGPTIIEDNCFIGARSEVVEGVVIEENSVLGMGVYIGQSTPIFNRDTGETSFGRVPSGSVVISGNLPKKTKSGQEYSTYAAIIVKTVDAQTRSKTSLNDLLRD.

Residues Arg106 and Asp143 each contribute to the substrate site.

This sequence belongs to the transferase hexapeptide repeat family. As to quaternary structure, homotrimer.

Its subcellular location is the cytoplasm. The catalysed reaction is (S)-2,3,4,5-tetrahydrodipicolinate + succinyl-CoA + H2O = (S)-2-succinylamino-6-oxoheptanedioate + CoA. Its pathway is amino-acid biosynthesis; L-lysine biosynthesis via DAP pathway; LL-2,6-diaminopimelate from (S)-tetrahydrodipicolinate (succinylase route): step 1/3. The polypeptide is 2,3,4,5-tetrahydropyridine-2,6-dicarboxylate N-succinyltransferase (Variovorax paradoxus (strain S110)).